Consider the following 469-residue polypeptide: Ribonuclease Y (469 aa).

The chain crosses the membrane as a helical span at residues 6–26 (VTLILVGVIIFLFISLFFYVI). A KH domain is found at 149–209 (FSFTIKLENE…IRREKAKRTM (61 aa)). The region spanning 276–369 (VLLHCVEAAV…VKVVDKLSAS (94 aa)) is the HD domain.

The protein belongs to the RNase Y family.

Its subcellular location is the cell membrane. Its function is as follows. Endoribonuclease that initiates mRNA decay. This chain is Ribonuclease Y, found in Malacoplasma penetrans (strain HF-2) (Mycoplasma penetrans).